We begin with the raw amino-acid sequence, 288 residues long: Alpha/beta hydrolase domain-containing protein 17B (288 aa).

Catalysis depends on charge relay system residues Ser170, Asp235, and His264.

This sequence belongs to the AB hydrolase superfamily. ABHD17 family. Post-translationally, palmitoylated on cysteine residues located in a cysteine cluster at the N-terminus which promotes membrane localization.

The protein localises to the cell membrane. The protein resides in the recycling endosome membrane. It is found in the cell projection. It localises to the dendritic spine. Its subcellular location is the postsynaptic density membrane. The enzyme catalyses S-hexadecanoyl-L-cysteinyl-[protein] + H2O = L-cysteinyl-[protein] + hexadecanoate + H(+). Functionally, hydrolyzes fatty acids from S-acylated cysteine residues in proteins. The chain is Alpha/beta hydrolase domain-containing protein 17B from Xenopus tropicalis (Western clawed frog).